A 348-amino-acid chain; its full sequence is Dihydroorotase (348 aa).

2 residues coordinate Zn(2+): His17 and His19. Substrate-binding positions include 19-21 (HLR) and Asn45. Zn(2+)-binding residues include Lys103, His140, and His178. An N6-carboxylysine modification is found at Lys103. His140 lines the substrate pocket. A substrate-binding site is contributed by Leu223. Asp251 contacts Zn(2+). Residue Asp251 is part of the active site. Substrate-binding residues include His255 and Ala267.

It belongs to the metallo-dependent hydrolases superfamily. DHOase family. Class II DHOase subfamily. Homodimer. Requires Zn(2+) as cofactor.

It carries out the reaction (S)-dihydroorotate + H2O = N-carbamoyl-L-aspartate + H(+). It participates in pyrimidine metabolism; UMP biosynthesis via de novo pathway; (S)-dihydroorotate from bicarbonate: step 3/3. Catalyzes the reversible cyclization of carbamoyl aspartate to dihydroorotate. The polypeptide is Dihydroorotase (Edwardsiella ictaluri (strain 93-146)).